The chain runs to 143 residues: SsrA-binding protein (143 aa).

This sequence belongs to the SmpB family.

Its subcellular location is the cytoplasm. In terms of biological role, required for rescue of stalled ribosomes mediated by trans-translation. Binds to transfer-messenger RNA (tmRNA), required for stable association of tmRNA with ribosomes. tmRNA and SmpB together mimic tRNA shape, replacing the anticodon stem-loop with SmpB. tmRNA is encoded by the ssrA gene; the 2 termini fold to resemble tRNA(Ala) and it encodes a 'tag peptide', a short internal open reading frame. During trans-translation Ala-aminoacylated tmRNA acts like a tRNA, entering the A-site of stalled ribosomes, displacing the stalled mRNA. The ribosome then switches to translate the ORF on the tmRNA; the nascent peptide is terminated with the 'tag peptide' encoded by the tmRNA and targeted for degradation. The ribosome is freed to recommence translation, which seems to be the essential function of trans-translation. The polypeptide is SsrA-binding protein (Mycoplasmoides gallisepticum (strain R(low / passage 15 / clone 2)) (Mycoplasma gallisepticum)).